The following is a 532-amino-acid chain: Egg peptide speract receptor (532 aa).

An N-terminal signal peptide occupies residues 1-30 (MGLPMMLQQYCWAACLVICIAISSVDDVGA). The Extracellular portion of the chain corresponds to 31–491 (EQNYGREAVE…VVCEGSTAPP (461 aa)). 4 SRCR domains span residues 43–144 (IRLI…VECL), 153–257 (LRMI…VVCK), 264–366 (IRLM…VVCA), and 382–485 (VRIV…VVCE). Intrachain disulfides connect Cys-68-Cys-133, Cys-81-Cys-143, Cys-112-Cys-122, Cys-178-Cys-244, Cys-191-Cys-256, Cys-223-Cys-233, Cys-289-Cys-355, Cys-302-Cys-365, Cys-335-Cys-345, Cys-406-Cys-475, Cys-419-Cys-484, and Cys-454-Cys-465. N-linked (GlcNAc...) asparagine glycosylation is found at Asn-78 and Asn-115. Asn-459 is a glycosylation site (N-linked (GlcNAc...) asparagine). The chain crosses the membrane as a helical span at residues 492–520 (SGMSIAVIGGAAGGGVAGLAVAAFAFYYI). Residues 521-532 (KFVKPAGGGGQA) lie on the Cytoplasmic side of the membrane.

It is found in the membrane. Receptor for the egg peptide speract. The chain is Egg peptide speract receptor from Strongylocentrotus purpuratus (Purple sea urchin).